The primary structure comprises 600 residues: MTDISKDRFLDALEGVGRPVATAEQIARELDCTQATAADALAALAADDEVERANVEPDPVVWYPRDWLELTDRERIVPFPDRREIIVDQPSQLTRAQLSRVAHLTDTTRTGSYRYEVRAEDVWAAPFDSLSDLVAAITELLPRDCPTLIEWVREQWTRATRFRLRTHDDGYVVLEAATDSLLGNVAEQKLDDDVLRAPISDTEAWVAAEQVAPLKRTLYEAGYPVRDDRDLESGEPLAVDLHLDLRPYQQDWVDRFEDASAGVLVGPPGSGKTVAAMGALESVGGETLVLVPSRELATQWREELLANTSLTGDQIGEYHGGEKRVRPVTIATYQTAGMDRHRHVFDDREWGLIVYDEVHHIPAEVARRSASLQSKHRLGLTATPVREDDKEADIYTLVGRPIGTDWDALFDAGFVAEPEVEIRYVPWRDDDDRYEYAAASGHTRRRLAAENPAKEAEIEHLVDQHGDTQALVFVDYLSQGERIAERLDAPFVNGETPHSRRETHFDQFRTGALDALVVSRIGDEGIDLPDAEFAVVASGLGGSRRQGAQRAGRTMRPGSQSLLFVLATRGTEEEDHARSRMRHLSTKGVRVTESDASHSP.

Residues 253-402 form the Helicase ATP-binding domain; sequence VDRFEDASAG…DIYTLVGRPI (150 aa). 266–273 provides a ligand contact to ATP; it reads GPPGSGKT. The DEAH box signature appears at 356 to 359; that stretch reads DEVH. Positions 457–600 constitute a Helicase C-terminal domain; the sequence is EIEHLVDQHG…VTESDASHSP (144 aa). Positions 569–600 are disordered; it reads RGTEEEDHARSRMRHLSTKGVRVTESDASHSP. Residues 590–600 are compositionally biased toward basic and acidic residues; that stretch reads RVTESDASHSP.

It belongs to the helicase family. RAD25/XPB subfamily.

It catalyses the reaction Couples ATP hydrolysis with the unwinding of duplex DNA by translocating in the 3'-5' direction.. It carries out the reaction ATP + H2O = ADP + phosphate + H(+). This is Putative DNA 3'-5' helicase Rad25 from Halobacterium salinarum (strain ATCC 700922 / JCM 11081 / NRC-1) (Halobacterium halobium).